The following is a 32-amino-acid chain: Cytochrome b6-f complex subunit 7 (32 aa).

A helical membrane pass occupies residues 9 to 27 (AALFWVLIPLGLAGGALLL).

It belongs to the PetM family. The 4 large subunits of the cytochrome b6-f complex are cytochrome b6, subunit IV (17 kDa polypeptide, PetD), cytochrome f and the Rieske protein, while the 4 small subunits are PetG, PetL, PetM and PetN. The complex functions as a dimer.

The protein resides in the cellular thylakoid membrane. In terms of biological role, component of the cytochrome b6-f complex, which mediates electron transfer between photosystem II (PSII) and photosystem I (PSI), cyclic electron flow around PSI, and state transitions. The polypeptide is Cytochrome b6-f complex subunit 7 (Synechococcus sp. (strain RCC307)).